The chain runs to 441 residues: Tubulin beta-1 chain (441 aa).

8 residues coordinate GTP: Gln11, Glu69, Ser138, Gly142, Thr143, Gly144, Asn204, and Asn226. Glu69 is a Mg(2+) binding site.

Belongs to the tubulin family. As to quaternary structure, dimer of alpha and beta chains. A typical microtubule is a hollow water-filled tube with an outer diameter of 25 nm and an inner diameter of 15 nM. Alpha-beta heterodimers associate head-to-tail to form protofilaments running lengthwise along the microtubule wall with the beta-tubulin subunit facing the microtubule plus end conferring a structural polarity. Microtubules usually have 13 protofilaments but different protofilament numbers can be found in some organisms and specialized cells. The cofactor is Mg(2+). As to expression, expressed primarily in touch receptor neurons.

It localises to the cytoplasm. Its subcellular location is the cytoskeleton. Tubulin is the major constituent of microtubules, a cylinder consisting of laterally associated linear protofilaments composed of alpha- and beta-tubulin heterodimers. Microtubules grow by the addition of GTP-tubulin dimers to the microtubule end, where a stabilizing cap forms. Below the cap, tubulin dimers are in GDP-bound state, owing to GTPase activity of alpha-tubulin. Plays a role in mechanosensory transduction (touch sensitivity). Its function is as follows. Mec-7 beta-tubulin is required for the production of 15-protofilament microtubules. In Caenorhabditis briggsae, this protein is Tubulin beta-1 chain (mec-7).